The primary structure comprises 545 residues: Lysine--tRNA ligase (545 aa).

A 'HIGH' region motif is present at residues 42–50; it reads PSGVPHIGH. The short motif at 307–311 is the 'KMSKS' region element; the sequence is PLSSS.

It belongs to the class-I aminoacyl-tRNA synthetase family.

The protein resides in the cytoplasm. The enzyme catalyses tRNA(Lys) + L-lysine + ATP = L-lysyl-tRNA(Lys) + AMP + diphosphate. In Haloarcula marismortui (strain ATCC 43049 / DSM 3752 / JCM 8966 / VKM B-1809) (Halobacterium marismortui), this protein is Lysine--tRNA ligase.